A 144-amino-acid polypeptide reads, in one-letter code: Putative HTH-type transcriptional regulator aq_268 (144 aa).

Residues 2 to 133 (IFSDTVRYAL…KGTTIKDLIN (132 aa)) form the HTH rrf2-type domain.

The sequence is that of Putative HTH-type transcriptional regulator aq_268 from Aquifex aeolicus (strain VF5).